The primary structure comprises 299 residues: Probable 4-deoxy-4-formamido-L-arabinose-phosphoundecaprenol deformylase ArnD (299 aa).

One can recognise a NodB homology domain in the interval 2-263; that stretch reads IDVGLRIDVD…EASARGIRFV (262 aa).

Belongs to the polysaccharide deacetylase family. ArnD deformylase subfamily.

The enzyme catalyses 4-deoxy-4-formamido-alpha-L-arabinopyranosyl di-trans,octa-cis-undecaprenyl phosphate + H2O = 4-amino-4-deoxy-alpha-L-arabinopyranosyl di-trans,octa-cis-undecaprenyl phosphate + formate. It functions in the pathway glycolipid biosynthesis; 4-amino-4-deoxy-alpha-L-arabinose undecaprenyl phosphate biosynthesis; 4-amino-4-deoxy-alpha-L-arabinose undecaprenyl phosphate from UDP-4-deoxy-4-formamido-beta-L-arabinose and undecaprenyl phosphate: step 2/2. Its pathway is bacterial outer membrane biogenesis; lipopolysaccharide biosynthesis. Its function is as follows. Catalyzes the deformylation of 4-deoxy-4-formamido-L-arabinose-phosphoundecaprenol to 4-amino-4-deoxy-L-arabinose-phosphoundecaprenol. The modified arabinose is attached to lipid A and is required for resistance to polymyxin and cationic antimicrobial peptides. The sequence is that of Probable 4-deoxy-4-formamido-L-arabinose-phosphoundecaprenol deformylase ArnD from Aeromonas salmonicida (strain A449).